Consider the following 152-residue polypeptide: Ribosome maturation factor RimP (152 aa).

It belongs to the RimP family.

Its subcellular location is the cytoplasm. Its function is as follows. Required for maturation of 30S ribosomal subunits. In Pseudoalteromonas atlantica (strain T6c / ATCC BAA-1087), this protein is Ribosome maturation factor RimP.